The following is a 555-amino-acid chain: Glucose-6-phosphate isomerase (555 aa).

E355 (proton donor) is an active-site residue. Catalysis depends on residues H386 and K514.

It belongs to the GPI family.

Its subcellular location is the cytoplasm. It catalyses the reaction alpha-D-glucose 6-phosphate = beta-D-fructose 6-phosphate. The protein operates within carbohydrate biosynthesis; gluconeogenesis. Its pathway is carbohydrate degradation; glycolysis; D-glyceraldehyde 3-phosphate and glycerone phosphate from D-glucose: step 2/4. Catalyzes the reversible isomerization of glucose-6-phosphate to fructose-6-phosphate. This Buchnera aphidicola subsp. Schizaphis graminum (strain Sg) protein is Glucose-6-phosphate isomerase.